The primary structure comprises 336 residues: 4-hydroxy-2-oxovalerate aldolase (336 aa).

The Pyruvate carboxyltransferase domain maps to 5-255 (IRIIDSTLRD…ETGVDLYKIM (251 aa)). Substrate is bound at residue 13-14 (RD). Aspartate 14 is a Mn(2+) binding site. The active-site Proton acceptor is histidine 17. Substrate contacts are provided by serine 167 and histidine 194. Positions 194 and 196 each coordinate Mn(2+). Tyrosine 285 is a binding site for substrate.

It belongs to the 4-hydroxy-2-oxovalerate aldolase family.

It catalyses the reaction (S)-4-hydroxy-2-oxopentanoate = acetaldehyde + pyruvate. This chain is 4-hydroxy-2-oxovalerate aldolase (mhpE), found in Carboxydothermus hydrogenoformans (strain ATCC BAA-161 / DSM 6008 / Z-2901).